A 264-amino-acid polypeptide reads, in one-letter code: Putative ankyrin repeat domain-containing protein 19 (264 aa).

5 ANK repeats span residues 67–96 (KDRTVLHLTCAHGRVEVVTLLLSRRCQINI), 100–129 (LNRTPLMKAVHCQEEACAIILLEHGANPNI), 133–162 (YSNTALHYAVYNKGTSLAEKLLSHHANIEA), 166–195 (EGNTPLLFAINSRRQQIVEFLLKNQANLHA), and 199–228 (FRRTALMLAVQHNSSSIVSLLLQQNINIFS).

The chain is Putative ankyrin repeat domain-containing protein 19 (ANKRD19P) from Homo sapiens (Human).